The sequence spans 707 residues: Polyribonucleotide nucleotidyltransferase (707 aa).

The Mg(2+) site is built by Asp-487 and Asp-493. One can recognise a KH domain in the interval 554 to 613 (PSMATIKIDPDKIRDVIGKGGATIRKICDDTGASIDLDDDGTVRIYAEDKTAAKAAIDTV). Residues 623 to 691 (GKLYRGTVAR…NRNRVKLSIK (69 aa)) form the S1 motif domain.

The protein belongs to the polyribonucleotide nucleotidyltransferase family. In terms of assembly, component of the RNA degradosome, which is a multiprotein complex involved in RNA processing and mRNA degradation. The cofactor is Mg(2+).

Its subcellular location is the cytoplasm. It carries out the reaction RNA(n+1) + phosphate = RNA(n) + a ribonucleoside 5'-diphosphate. Functionally, involved in mRNA degradation. Catalyzes the phosphorolysis of single-stranded polyribonucleotides processively in the 3'- to 5'-direction. The protein is Polyribonucleotide nucleotidyltransferase of Chromohalobacter salexigens (strain ATCC BAA-138 / DSM 3043 / CIP 106854 / NCIMB 13768 / 1H11).